We begin with the raw amino-acid sequence, 313 residues long: MAGENHTTLPEFLLLGFSDLKALQGPLFWVVLLVYLVTLLGNSLIILLTQVSPALHSPMYFFLRQLSVVELFYTTDIVPRTLANLGSPHPQAISFQGCAAQMYVFIVLGISECCLLTAMAYDRYVAICQPLRYSTLLSPRACMAMVGTSWLTGIITATTHASLIFSLPFRSHPIIPHFLCDILPVLRLASAGKHRSEISVMTATIVFIMIPFSLIVTSYIRILGAILAMASTQSRRKVFSTCSSHLLVVSLFFGTASITYIRPQAGSSVTTDRVLSLFYTVITPMLNPIIYTLRNKDVRRALRHLVKRQRPSP.

The Extracellular portion of the chain corresponds to 1-25 (MAGENHTTLPEFLLLGFSDLKALQG). Residue Asn-5 is glycosylated (N-linked (GlcNAc...) asparagine). The chain crosses the membrane as a helical span at residues 26-46 (PLFWVVLLVYLVTLLGNSLII). Residues 47 to 54 (LLTQVSPA) are Cytoplasmic-facing. Residues 55 to 75 (LHSPMYFFLRQLSVVELFYTT) traverse the membrane as a helical segment. Topologically, residues 76–100 (DIVPRTLANLGSPHPQAISFQGCAA) are extracellular. Residues 101–121 (QMYVFIVLGISECCLLTAMAY) form a helical membrane-spanning segment. Residues 122 to 140 (DRYVAICQPLRYSTLLSPR) are Cytoplasmic-facing. Residues 141–161 (ACMAMVGTSWLTGIITATTHA) traverse the membrane as a helical segment. At 162 to 198 (SLIFSLPFRSHPIIPHFLCDILPVLRLASAGKHRSEI) the chain is on the extracellular side. Residues 199 to 218 (SVMTATIVFIMIPFSLIVTS) form a helical membrane-spanning segment. Residues 219-238 (YIRILGAILAMASTQSRRKV) lie on the Cytoplasmic side of the membrane. The helical transmembrane segment at 239–259 (FSTCSSHLLVVSLFFGTASIT) threads the bilayer. At 260–272 (YIRPQAGSSVTTD) the chain is on the extracellular side. Residues 273-293 (RVLSLFYTVITPMLNPIIYTL) form a helical membrane-spanning segment. The Cytoplasmic segment spans residues 294–313 (RNKDVRRALRHLVKRQRPSP).

Belongs to the G-protein coupled receptor 1 family.

The protein resides in the cell membrane. Functionally, odorant receptor. This chain is Olfactory receptor 10P1 (OR10P1), found in Homo sapiens (Human).